The following is a 222-amino-acid chain: Putative hemin import ATP-binding protein HrtA (222 aa).

The ABC transporter domain maps to 3–222 (LVVKDISKTF…QLYDGKIKNS (220 aa)). 39–46 (GASGSGKT) serves as a coordination point for ATP.

It belongs to the ABC transporter superfamily. HrtA family. As to quaternary structure, the complex is composed of two ATP-binding proteins (HrtA), two transmembrane proteins (HrtB) and a solute-binding protein.

Its subcellular location is the cell membrane. Functionally, part of the ABC transporter complex hrt involved in hemin import. Responsible for energy coupling to the transport system. The chain is Putative hemin import ATP-binding protein HrtA (hrtA) from Staphylococcus epidermidis (strain ATCC 35984 / DSM 28319 / BCRC 17069 / CCUG 31568 / BM 3577 / RP62A).